The sequence spans 365 residues: 2-aminoethylphosphonate--pyruvate transaminase (365 aa).

Position 194 is an N6-(pyridoxal phosphate)lysine (Lys-194).

This sequence belongs to the class-V pyridoxal-phosphate-dependent aminotransferase family. PhnW subfamily. In terms of assembly, homodimer. Pyridoxal 5'-phosphate serves as cofactor.

The enzyme catalyses (2-aminoethyl)phosphonate + pyruvate = phosphonoacetaldehyde + L-alanine. Involved in phosphonate degradation. The sequence is that of 2-aminoethylphosphonate--pyruvate transaminase from Bacillus cereus (strain 03BB102).